Reading from the N-terminus, the 247-residue chain is 3(1)-hydroxy-L-isoleucine 4-dioxygenase (247 aa).

Positions 160, 162, and 213 each coordinate Fe cation.

This sequence belongs to the iron/ascorbate-dependent oxidoreductase family. L-ascorbate serves as cofactor. Requires Fe(2+) as cofactor.

The catalysed reaction is 3(1)-hydroxy-L-isoleucine + 2-oxoglutarate + O2 = (4S)-3(1),4-dihydroxy-L-isoleucine + succinate + CO2. Catalyzes the hydroxylation of L-4'-hydroxyisoleucine (4'-HIL) at the C-4 position to form L-4,4'-dihydroxyisoleucine (4,4'-DIHIL). Together with HilA, catalyzes the two step conversion of L-isoleucine into L-4,4'-dihydroxyisoleucine. In vitro, in the absence of HilA, can also catalyze the oxidation of L-methionine and the C-4-hydroxylation of L-leucine and L-isoleucine. In Pantoea ananatis (strain AJ13355), this protein is 3(1)-hydroxy-L-isoleucine 4-dioxygenase.